Reading from the N-terminus, the 232-residue chain is Ion-translocating oxidoreductase complex subunit E (232 aa).

The next 6 helical transmembrane spans lie at 18–38 (GLVQ…ITNA), 39–59 (LGLG…VSLV), 69–89 (IPVF…LINA), 93–113 (GLYL…IIIG), 127–147 (AAFD…VLGA), and 182–202 (PFLL…LIAL).

The protein belongs to the NqrDE/RnfAE family. In terms of assembly, the complex is composed of six subunits: RnfA, RnfB, RnfC, RnfD, RnfE and RnfG.

The protein localises to the cell inner membrane. Functionally, part of a membrane-bound complex that couples electron transfer with translocation of ions across the membrane. The chain is Ion-translocating oxidoreductase complex subunit E from Shewanella sp. (strain W3-18-1).